The following is a 100-amino-acid chain: Large ribosomal subunit protein uL23 (100 aa).

It belongs to the universal ribosomal protein uL23 family. In terms of assembly, part of the 50S ribosomal subunit. Contacts protein L29, and trigger factor when it is bound to the ribosome.

One of the early assembly proteins it binds 23S rRNA. One of the proteins that surrounds the polypeptide exit tunnel on the outside of the ribosome. Forms the main docking site for trigger factor binding to the ribosome. The chain is Large ribosomal subunit protein uL23 from Synechococcus sp. (strain CC9605).